A 291-amino-acid chain; its full sequence is Foldase protein PrsA 2 (291 aa).

The signal sequence occupies residues 1-20 (MKKKLILGLVMMMALFSLAA). The N-palmitoyl cysteine moiety is linked to residue cysteine 21. Cysteine 21 is lipidated: S-diacylglycerol cysteine. A PpiC domain is found at 135–226 (QPDITVSHIL…YGYHIIQMDK (92 aa)).

It belongs to the PrsA family.

The protein localises to the cell membrane. The catalysed reaction is [protein]-peptidylproline (omega=180) = [protein]-peptidylproline (omega=0). Functionally, plays a major role in protein secretion by helping the post-translocational extracellular folding of several secreted proteins. The chain is Foldase protein PrsA 2 (prsA2) from Listeria innocua serovar 6a (strain ATCC BAA-680 / CLIP 11262).